The following is a 313-amino-acid chain: Probable pyridoxal 5'-phosphate synthase subunit PDX1.2 (313 aa).

D-ribose 5-phosphate is bound at residue Asp-42. The active-site Schiff-base intermediate with D-ribose 5-phosphate is the Lys-99. Gly-171 serves as a coordination point for D-ribose 5-phosphate. Arg-183 contacts D-glyceraldehyde 3-phosphate. Residues Gly-232 and 253–254 (GS) each bind D-ribose 5-phosphate.

The protein belongs to the PdxS/SNZ family.

The catalysed reaction is aldehydo-D-ribose 5-phosphate + D-glyceraldehyde 3-phosphate + L-glutamine = pyridoxal 5'-phosphate + L-glutamate + phosphate + 3 H2O + H(+). The protein operates within cofactor biosynthesis; pyridoxal 5'-phosphate biosynthesis. Functionally, catalyzes the formation of pyridoxal 5'-phosphate from ribose 5-phosphate (RBP), glyceraldehyde 3-phosphate (G3P) and ammonia. The ammonia is provided by PDX2. Can also use ribulose 5-phosphate and dihydroxyacetone phosphate as substrates, resulting from enzyme-catalyzed isomerization of RBP and G3P, respectively. Also plays an indirect role in resistance to singlet oxygen-generating photosensitizers. The chain is Probable pyridoxal 5'-phosphate synthase subunit PDX1.2 (PDX12) from Oryza sativa subsp. japonica (Rice).